The chain runs to 294 residues: Ribosomal protein L11 methyltransferase (294 aa).

Positions 145, 166, 188, and 227 each coordinate S-adenosyl-L-methionine.

It belongs to the methyltransferase superfamily. PrmA family.

Its subcellular location is the cytoplasm. It carries out the reaction L-lysyl-[protein] + 3 S-adenosyl-L-methionine = N(6),N(6),N(6)-trimethyl-L-lysyl-[protein] + 3 S-adenosyl-L-homocysteine + 3 H(+). Functionally, methylates ribosomal protein L11. In Hydrogenovibrio crunogenus (strain DSM 25203 / XCL-2) (Thiomicrospira crunogena), this protein is Ribosomal protein L11 methyltransferase.